The primary structure comprises 580 residues: Tricyclene synthase TPS4, chloroplastic (580 aa).

A chloroplast-targeting transit peptide spans 1-41; that stretch reads MLLNSSFISLPSFFKSQELGRTNLLIHRNGSPLLCYATNTN. (2E)-geranyl diphosphate-binding residues include arginine 296, aspartate 334, aspartate 338, arginine 475, and asparagine 478. 2 residues coordinate Mg(2+): aspartate 334 and aspartate 338. Residues 334–338 carry the DDXXD motif motif; the sequence is DDIYD. Residues asparagine 478, threonine 482, and glutamate 486 each contribute to the Mg(2+) site.

Belongs to the terpene synthase family. Tpsb subfamily. The cofactor is Mg(2+). Requires Mn(2+) as cofactor. As to expression, expressed in leaves.

It localises to the plastid. Its subcellular location is the chloroplast stroma. It carries out the reaction (2E)-geranyl diphosphate = tricyclene + diphosphate. It catalyses the reaction (2E)-geranyl diphosphate = (E)-beta-ocimene + diphosphate. The protein operates within secondary metabolite biosynthesis; terpenoid biosynthesis. Its function is as follows. Promotes the emission of terpenes volatile organic compounds (VOC) in response to damage mediated by arthropod herbivores (e.g. Spodoptera exigua), probably to attract natural enemies of the herbivores. The chain is Tricyclene synthase TPS4, chloroplastic (TPS4) from Medicago truncatula (Barrel medic).